We begin with the raw amino-acid sequence, 656 residues long: Chaperone protein DnaK (656 aa).

At T204 the chain carries Phosphothreonine; by autocatalysis. Positions 607–656 (VYAKKGGAAGAPPGGEAEGEPQAQAGGKKEDVVDAEFEEVKDEKKKDEDK) are disordered. A compositionally biased stretch (low complexity) spans 620 to 632 (GGEAEGEPQAQAG). A compositionally biased stretch (basic and acidic residues) spans 647–656 (KDEKKKDEDK).

This sequence belongs to the heat shock protein 70 family.

In terms of biological role, acts as a chaperone. The chain is Chaperone protein DnaK from Coxiella burnetii (strain CbuK_Q154) (Coxiella burnetii (strain Q154)).